The sequence spans 271 residues: Formamidopyrimidine-DNA glycosylase (271 aa).

P2 functions as the Schiff-base intermediate with DNA in the catalytic mechanism. Catalysis depends on E3, which acts as the Proton donor. K57 functions as the Proton donor; for beta-elimination activity in the catalytic mechanism. H90, R109, and K151 together coordinate DNA. The FPG-type zinc finger occupies 236–270; that stretch reads HVYGRGGETCTQCGNLLSEIRLGQRTTVFCSICQP. Residue R260 is the Proton donor; for delta-elimination activity of the active site.

Belongs to the FPG family. Monomer. The cofactor is Zn(2+).

It carries out the reaction Hydrolysis of DNA containing ring-opened 7-methylguanine residues, releasing 2,6-diamino-4-hydroxy-5-(N-methyl)formamidopyrimidine.. It catalyses the reaction 2'-deoxyribonucleotide-(2'-deoxyribose 5'-phosphate)-2'-deoxyribonucleotide-DNA = a 3'-end 2'-deoxyribonucleotide-(2,3-dehydro-2,3-deoxyribose 5'-phosphate)-DNA + a 5'-end 5'-phospho-2'-deoxyribonucleoside-DNA + H(+). In terms of biological role, involved in base excision repair of DNA damaged by oxidation or by mutagenic agents. Acts as a DNA glycosylase that recognizes and removes damaged bases. Has a preference for oxidized purines, such as 7,8-dihydro-8-oxoguanine (8-oxoG). Has AP (apurinic/apyrimidinic) lyase activity and introduces nicks in the DNA strand. Cleaves the DNA backbone by beta-delta elimination to generate a single-strand break at the site of the removed base with both 3'- and 5'-phosphates. The chain is Formamidopyrimidine-DNA glycosylase from Shewanella oneidensis (strain ATCC 700550 / JCM 31522 / CIP 106686 / LMG 19005 / NCIMB 14063 / MR-1).